An 878-amino-acid polypeptide reads, in one-letter code: Aconitate hydratase A (878 aa).

3 residues coordinate [4Fe-4S] cluster: C426, C492, and C495.

This sequence belongs to the aconitase/IPM isomerase family. As to quaternary structure, monomer. [4Fe-4S] cluster is required as a cofactor.

The enzyme catalyses citrate = D-threo-isocitrate. It carries out the reaction (2S,3R)-3-hydroxybutane-1,2,3-tricarboxylate = 2-methyl-cis-aconitate + H2O. The protein operates within carbohydrate metabolism; tricarboxylic acid cycle; isocitrate from oxaloacetate: step 2/2. It functions in the pathway organic acid metabolism; propanoate degradation. Functionally, involved in the catabolism of short chain fatty acids (SCFA) via the tricarboxylic acid (TCA)(acetyl degradation route) and probably the 2-methylcitrate cycle I (propionate degradation route). Catalyzes the reversible isomerization of citrate to isocitrate via cis-aconitate. Could catalyze the hydration of 2-methyl-cis-aconitate to yield (2R,3S)-2-methylisocitrate. The apo form of AcnA functions as a RNA-binding regulatory protein. This is Aconitate hydratase A (acnA) from Rickettsia conorii (strain ATCC VR-613 / Malish 7).